The following is a 149-amino-acid chain: F420H(2)-dependent quinone reductase MT1299 (149 aa).

Residues 48–50 (AKT), 54–59 (RTTSLT), 70–73 (VASK), 81–85 (GWYHN), and tyrosine 130 contribute to the coenzyme F420-(gamma-Glu)n site.

The protein belongs to the F420H(2)-dependent quinone reductase family.

The protein resides in the cell membrane. The enzyme catalyses oxidized coenzyme F420-(gamma-L-Glu)(n) + a quinol + H(+) = reduced coenzyme F420-(gamma-L-Glu)(n) + a quinone. Involved in a F420-dependent anti-oxidant mechanism that protects M.tuberculosis against oxidative stress and bactericidal agents. Catalyzes the F420H(2)-dependent two-electron reduction of quinones to dihydroquinones, thereby preventing the formation of cytotoxic semiquinones obtained by the one-electron reduction pathway. In vitro, catalyzes the reduction of menadione to menadiol; since menaquinone is the sole quinone electron carrier in the respiratory chain in M.tuberculosis, the physiological electron acceptor for Fqr-mediated F420H(2) oxidation is therefore likely to be the endogenous menaquinone found in the membrane fraction of M.tuberculosis. The sequence is that of F420H(2)-dependent quinone reductase MT1299 from Mycobacterium tuberculosis (strain CDC 1551 / Oshkosh).